The chain runs to 56 residues: Large ribosomal subunit protein bL33 (56 aa).

It belongs to the bacterial ribosomal protein bL33 family.

The chain is Large ribosomal subunit protein bL33 from Delftia acidovorans (strain DSM 14801 / SPH-1).